The primary structure comprises 199 residues: Probable thymidylate kinase (199 aa).

13 to 20 (GIDGAGKT) serves as a coordination point for ATP.

This sequence belongs to the thymidylate kinase family.

It carries out the reaction dTMP + ATP = dTDP + ADP. In Staphylothermus marinus (strain ATCC 43588 / DSM 3639 / JCM 9404 / F1), this protein is Probable thymidylate kinase.